The chain runs to 111 residues: N-alpha-acetyltransferase 38-B, NatC auxiliary subunit (111 aa).

Residues 28–106 (TARHKLESLL…IVSIQVELET (79 aa)) form the Sm domain.

Belongs to the snRNP Sm proteins family. Component of the N-terminal acetyltransferase C (NatC) complex, which is composed of naa35, naa38 and naa30.

It localises to the cytoplasm. Functionally, auxillary component of the N-terminal acetyltransferase C (NatC) complex which catalyzes acetylation of N-terminal methionine residues. This Xenopus laevis (African clawed frog) protein is N-alpha-acetyltransferase 38-B, NatC auxiliary subunit (naa38-b).